The chain runs to 104 residues: Large ribosomal subunit protein uL24 (104 aa).

This sequence belongs to the universal ribosomal protein uL24 family. Part of the 50S ribosomal subunit.

One of two assembly initiator proteins, it binds directly to the 5'-end of the 23S rRNA, where it nucleates assembly of the 50S subunit. In terms of biological role, one of the proteins that surrounds the polypeptide exit tunnel on the outside of the subunit. The chain is Large ribosomal subunit protein uL24 from Bartonella henselae (strain ATCC 49882 / DSM 28221 / CCUG 30454 / Houston 1) (Rochalimaea henselae).